The following is a 175-amino-acid chain: Clathrin-associated protein AP-3 complex component APS3 (175 aa).

Belongs to the adaptor complexes small subunit family. As to quaternary structure, adaptor protein complex 3 (AP-3) is a heterotetramer composed of 2 large adaptins, a medium adaptin and a small adaptin.

Its subcellular location is the golgi apparatus. It is found in the cytoplasmic vesicle membrane. Its function is as follows. Part of the AP-3 complex, an adapter-related complex which is not clathrin-associated. The complex is associated with the Golgi region as well as more peripheral structures. It facilitates the budding of vesicles from the Golgi membrane. Involved in vacuolar trafficking and contributes to hyphal growth and pathogenesis. This chain is Clathrin-associated protein AP-3 complex component APS3 (APS3), found in Candida albicans (strain SC5314 / ATCC MYA-2876) (Yeast).